The chain runs to 97 residues: Co-chaperonin GroES (97 aa).

It belongs to the GroES chaperonin family. Heptamer of 7 subunits arranged in a ring. Interacts with the chaperonin GroEL.

The protein localises to the cytoplasm. In terms of biological role, together with the chaperonin GroEL, plays an essential role in assisting protein folding. The GroEL-GroES system forms a nano-cage that allows encapsulation of the non-native substrate proteins and provides a physical environment optimized to promote and accelerate protein folding. GroES binds to the apical surface of the GroEL ring, thereby capping the opening of the GroEL channel. The sequence is that of Co-chaperonin GroES from Salmonella agona (strain SL483).